We begin with the raw amino-acid sequence, 101 residues long: Urease subunit beta (101 aa).

Belongs to the urease beta subunit family. Heterotrimer of UreA (gamma), UreB (beta) and UreC (alpha) subunits. Three heterotrimers associate to form the active enzyme.

It is found in the cytoplasm. It carries out the reaction urea + 2 H2O + H(+) = hydrogencarbonate + 2 NH4(+). It functions in the pathway nitrogen metabolism; urea degradation; CO(2) and NH(3) from urea (urease route): step 1/1. This is Urease subunit beta from Psychromonas ingrahamii (strain DSM 17664 / CCUG 51855 / 37).